A 155-amino-acid chain; its full sequence is Ribonuclease H (155 aa).

The RNase H type-1 domain maps to 4-145; that stretch reads QQKVVEIYTD…ADALARKAIT (142 aa). Residues aspartate 13, glutamate 51, aspartate 73, and aspartate 137 each contribute to the Mg(2+) site.

Belongs to the RNase H family. As to quaternary structure, monomer. Mg(2+) serves as cofactor.

It localises to the cytoplasm. The catalysed reaction is Endonucleolytic cleavage to 5'-phosphomonoester.. In terms of biological role, endonuclease that specifically degrades the RNA of RNA-DNA hybrids. The polypeptide is Ribonuclease H (Bartonella quintana (strain Toulouse) (Rochalimaea quintana)).